A 59-amino-acid chain; its full sequence is uncharacterized protein (59 aa).

Position 33–40 (33–40 (GRRRVGKT)) interacts with ATP.

This is an uncharacterized protein from Methanocaldococcus jannaschii (strain ATCC 43067 / DSM 2661 / JAL-1 / JCM 10045 / NBRC 100440) (Methanococcus jannaschii).